The chain runs to 304 residues: MWFKNLTLYRFNKPFAVETEALETALADFTFSPCSSQDVSKFGFSNALGKKGCSLVHSADNRHLICVTKEEKILPGQVIKEALEEKVALIEDEENRKMAKKEKDALKDEIITSLLPRAFSRRSQTHALILPELEMILVDSSSATKAEELLALLRKALGSLPVIPLSFKAPVESNLTEWLKLGSAPLPFEMQDEAELKSEADEGGIVRFKQQDLKEDEVLAHLATGKQVHKLALHFGQSIALLLQSDASVKRLKFSEEFRAGNDEVGTDDPMARLDADFALMGSELVALMHALVAALGGLEDAQV.

The protein belongs to the RdgC family.

It is found in the cytoplasm. The protein localises to the nucleoid. In terms of biological role, may be involved in recombination. The protein is Recombination-associated protein RdgC of Shewanella baltica (strain OS185).